The sequence spans 259 residues: MNRDNTIAWAVDDLCVNYDHSDVLCHIAFSLPSGAMAAIIGPNGAGKSTLLKASLGLIRASSGQSLFFGQKFAKVHQRIAYMPQRASVDWDFPMTVLDLVLMGCYGYKGMWNRISTGDRREAMNILERVGLADFANRQIGKLSGGQQQRAFLARSLMQKADLYLMDELFSAIDMASYRMVVDVLQDLKKEGKTIVVIHHDLSNVRQLFDHVILLNKHLVCSGSVEKCLTKEAIFQAYGCELELLDYTLKLSRGKYQGSC.

One can recognise an ABC transporter domain in the interval tryptophan 9–leucine 241. Residue glycine 41–serine 48 participates in ATP binding.

The protein belongs to the ABC transporter superfamily.

Its subcellular location is the cell inner membrane. In terms of biological role, part of an ATP-driven transport system TC_0338/TC_0339/TC_0341/TC_0342 for a metal. Probably responsible for energy coupling to the transport system. The chain is Probable metal transport system ATP-binding protein TC_0339 from Chlamydia muridarum (strain MoPn / Nigg).